Here is a 180-residue protein sequence, read N- to C-terminus: uncharacterized protein (180 aa).

It belongs to the CdaR family.

This is an uncharacterized protein from Thermomonospora curvata.